Here is a 500-residue protein sequence, read N- to C-terminus: Glycerol kinase (500 aa).

Thr-11 contacts ADP. ATP is bound by residues Thr-11, Thr-12, and Ser-13. A sn-glycerol 3-phosphate-binding site is contributed by Thr-11. Arg-15 lines the ADP pocket. 4 residues coordinate sn-glycerol 3-phosphate: Arg-81, Glu-82, Tyr-133, and Asp-242. The glycerol site is built by Arg-81, Glu-82, Tyr-133, Asp-242, and Gln-243. Thr-264 and Gly-307 together coordinate ADP. ATP contacts are provided by Thr-264, Gly-307, Gln-311, and Gly-411. Gly-411 is an ADP binding site.

This sequence belongs to the FGGY kinase family.

It catalyses the reaction glycerol + ATP = sn-glycerol 3-phosphate + ADP + H(+). The protein operates within polyol metabolism; glycerol degradation via glycerol kinase pathway; sn-glycerol 3-phosphate from glycerol: step 1/1. Inhibited by fructose 1,6-bisphosphate (FBP). Key enzyme in the regulation of glycerol uptake and metabolism. Catalyzes the phosphorylation of glycerol to yield sn-glycerol 3-phosphate. This Bradyrhizobium sp. (strain BTAi1 / ATCC BAA-1182) protein is Glycerol kinase.